We begin with the raw amino-acid sequence, 2752 residues long: Piezo-type mechanosensitive ion channel component 2 (2752 aa).

At 1 to 12 the chain is on the cytoplasmic side; sequence MASEVVCGLIFR. The helical transmembrane segment at 13 to 24 threads the bilayer; the sequence is LLLPICLAVACA. Residues 25–30 lie on the Extracellular side of the membrane; that stretch reads FRYNGL. A helical transmembrane segment spans residues 31 to 43; that stretch reads SFVYLIYLLLIPL. Residues 44-50 are Cytoplasmic-facing; that stretch reads FSEPTKT. Residues 51–76 traverse the membrane as a helical segment; it reads TMQGHTGRLLKSLCFISLSFLLLHII. Residues 77-122 lie on the Extracellular side of the membrane; sequence FHITLVSLEAQHRIAPGYNCSTWEKTFRQIGFESLKGADAGNGIRV. N95 carries N-linked (GlcNAc...) asparagine glycosylation. A helical transmembrane segment spans residues 123 to 141; sequence FVPDIGMFIASLTIWLLCR. The Cytoplasmic segment spans residues 142-221; that stretch reads NIVQKPVTDE…KEFIGNMITT (80 aa). A helical transmembrane segment spans residues 222–237; that stretch reads AGKVVVTILLGSSGMM. Residues 238–240 are Extracellular-facing; the sequence is LPS. The chain crosses the membrane as a helical span at residues 241-258; it reads LTSSVYFFVFLGLCTWWS. Residues 259–264 lie on the Cytoplasmic side of the membrane; that stretch reads WCRTFD. The helical transmembrane segment at 265–287 threads the bilayer; sequence PLLFSCLCVLLAIFTAGHLIGLY. Over 288–335 the chain is Extracellular; sequence LYQFQFFQEAVPPNDYYARLFGIKSVIQTDCSSTWKIIVNPDLSWYHH. The chain crosses the membrane as a helical span at residues 336–355; the sequence is ANPILLLVMYYTLATLIRIW. The Cytoplasmic portion of the chain corresponds to 356-492; sequence LQEPLVQDEG…SIKVHAMVSV (137 aa). Positions 446-478 are disordered; the sequence is STPQYRWEPSDESSEKREEEEEEKEEFEEERSR. Over residues 463 to 474 the composition is skewed to acidic residues; it reads EEEEEEKEEFEE. Residues 493-514 form a helical membrane-spanning segment; the sequence is FQFIMKQSYICALIAMMAWSIT. The Extracellular portion of the chain corresponds to 515–519; the sequence is YHSWL. Residues 520-531 traverse the membrane as a helical segment; the sequence is TFVLLIWSCTLW. Residues 532–535 lie on the Cytoplasmic side of the membrane; the sequence is MIRN. A helical membrane pass occupies residues 536–562; that stretch reads RRKYAMISSPFMVVYGNLLLILQYIWS. At 563-583 the chain is on the extracellular side; that stretch reads FELPEIKKVPGFLEKKEPGEL. Residues 584–614 traverse the membrane as a helical segment; sequence ASKILFTITFWLLLRQHLTEQKALQEKEALL. Over 615 to 685 the chain is Cytoplasmic; it reads SEVKIGSQEN…GNLVVAMFIK (71 aa). Positions 623–632 are enriched in acidic residues; sequence ENEEKDEELQ. A disordered region spans residues 623-664; that stretch reads ENEEKDEELQDIQVEGEPKEEEEEEAKEEKQERKKVEQEEAE. A compositionally biased stretch (basic and acidic residues) spans 649–660; it reads KEEKQERKKVEQ. The helical transmembrane segment at 686–699 threads the bilayer; the sequence is YWIYVCGGMFFFVS. Topologically, residues 700–705 are extracellular; that stretch reads FEGKIV. The helical transmembrane segment at 706–724 threads the bilayer; the sequence is MYKIIYMVLFLFCVALYQV. Topologically, residues 725–733 are cytoplasmic; the sequence is HYEWWRKIL. A helical membrane pass occupies residues 734-753; that stretch reads KYFWMSVVIYTMLVLIFIYT. The Extracellular portion of the chain corresponds to 754-785; that stretch reads YQFENFPGLWQNMTGLKKEKLEDLGLKQFTVA. A helical transmembrane segment spans residues 786–807; it reads ELFTRIFIPTSFLLVCILHLHY. Over 808–940 the chain is Cytoplasmic; the sequence is FHDRFLELTD…QVFMWWILEL (133 aa). S838 carries the post-translational modification Phosphoserine. A compositionally biased stretch (basic and acidic residues) spans 862–883; sequence PGEEKLEGYSEKAQKGDLGKDS. Residues 862 to 902 form a disordered region; the sequence is PGEEKLEGYSEKAQKGDLGKDSEESEEDGEEEEESEEEEET. Acidic residues predominate over residues 884–902; sequence EESEEDGEEEEESEEEEET. Residues 941 to 956 traverse the membrane as a helical segment; the sequence is HIIKIVSSYIIWVSVK. Residues 957–962 are Extracellular-facing; it reads EVSLFN. Residues 963–972 traverse the membrane as a helical segment; that stretch reads YVFLISWAFA. The Cytoplasmic segment spans residues 973 to 980; it reads LPYAKLRR. The chain crosses the membrane as a helical span at residues 981 to 1001; it reads LASSVCTVWTCVIIVCKMLYQ. The Extracellular segment spans residues 1002 to 1057; the sequence is LQTIKPENFSVNCSLPNENQTNIPFNELNKSLLYSAPIDPTEWVGLRKSSPLLVYL. The N-linked (GlcNAc...) asparagine glycan is linked to N1013. A disulfide bridge connects residues C1014 and C1192. A helical membrane pass occupies residues 1058–1082; it reads RNNLLMLAILAFEVTIYRHQEYYRG. At 1083–1123 the chain is on the cytoplasmic side; the sequence is RNNLTAPVSRTIFHDITRLHLDDGLINCAKYFINYFFYKFG. The chain crosses the membrane as a helical span at residues 1124 to 1138; it reads LETCFLMSVNVIGQR. At 1139–1140 the chain is on the extracellular side; it reads MD. Residues 1141–1154 traverse the membrane as a helical segment; that stretch reads FYAMIHACWLIAVL. Residues 1155 to 1165 lie on the Cytoplasmic side of the membrane; the sequence is YRRRRKAIAEI. Residues 1166–1185 traverse the membrane as a helical segment; sequence WPKYCCFLACIITFQYFICI. Topologically, residues 1186-1222 are extracellular; sequence GIPPAPCRDYPWRFKGASFNDNIIKWLYFPDFIVRPN. The helical transmembrane segment at 1223–1243 threads the bilayer; sequence PVFLVYDFMLLLCASLQRQIF. Residues 1244-1297 are Cytoplasmic-facing; that stretch reads EDENKAAVRIMAGDNVEICMNLDAASFSQHNPVPDFIHCRSYLDMSKVIIFSYL. A helical transmembrane segment spans residues 1298 to 1310; it reads FWFVLTIIFITGT. At 1311-1316 the chain is on the extracellular side; that stretch reads TRISIF. A helical transmembrane segment spans residues 1317 to 1329; it reads CMGYLVACFYFLL. The Cytoplasmic segment spans residues 1330–1338; that stretch reads FGGDLLLKP. The helical transmembrane segment at 1339–1364 threads the bilayer; the sequence is IKSILRYWDWLIAYNVFVITMKNILS. The Extracellular segment spans residues 1365–1413; sequence IGACGYIGTLVHNSCWLIQAFSLACTVKGYQMPAANSPCTLPSGEAGII. Residues 1414-1430 form a helical membrane-spanning segment; it reads WDSICFAFLLLQRRVFM. Over 1431-1921 the chain is Cytoplasmic; the sequence is SYYFLHVVAD…YAMYNTLVAR (491 aa). Residues 1458 to 1529 are a coiled coil; sequence TIVKAVKARI…EREADKQKAK (72 aa). 3 disordered regions span residues 1488–1534, 1593–1636, and 1844–1868; these read QQKY…KKKQ, ALRQ…KKSD, and SQDDSAGKNRMAVSPDDSRTDKLGS. Positions 1594-1615 are enriched in basic residues; the sequence is LRQRHKEKKRSAREERKRRRKG. The helical transmembrane segment at 1922-1936 threads the bilayer; it reads SEMVCYFVIILNHMV. The Extracellular portion of the chain corresponds to 1937-1943; sequence SASMITL. A helical transmembrane segment spans residues 1944–1955; that stretch reads LLPILIFLWAML. Over 1956–1961 the chain is Cytoplasmic; it reads SVPRPS. A helical membrane pass occupies residues 1962–1983; that stretch reads RRFWMMAIVYTEVAIVVKYFFQ. The Extracellular segment spans residues 1984 to 2016; sequence FGFFPWNKNVEVNKDKPYHPPNIIGVEKKEGYV. Residues 2017–2035 form a helical membrane-spanning segment; sequence LYDLIQLLALFFHRSILKC. At 2036-2189 the chain is on the cytoplasmic side; that stretch reads HGLWDEDDMT…HPEYSAVTDV (154 aa). Disordered stretches follow at residues 2047–2069 and 2090–2135; these read SGMAREESDDELSLGHGRRDSSD and QQTA…SVLS. The span at 2100–2127 shows a compositional bias: low complexity; that stretch reads GSSSEPSQRSSFSSNRSQRGSTSTRNSS. A helical membrane pass occupies residues 2190 to 2209; that stretch reads YVLMFLADTVDFIIIVFGFW. Topologically, residues 2210–2231 are extracellular; sequence AFGKHSAAADITSSLSEDQVPG. The helical transmembrane segment at 2232–2252 threads the bilayer; that stretch reads PFLVMVLIQFGTMVVDRALYL. The Cytoplasmic portion of the chain corresponds to 2253 to 2256; the sequence is RKTV. Residues 2257–2280 form a helical membrane-spanning segment; sequence LGKVIFQVILVFGIHFWMFFILPG. The Extracellular portion of the chain corresponds to 2281-2289; sequence VTERKFSQN. The helical transmembrane segment at 2290–2312 threads the bilayer; it reads LVAQLWYFVKCVYFGLSAYQIRC. Residues 2313–2397 lie on the Cytoplasmic side of the membrane; the sequence is GYPTRVLGNF…YPQPRGQKKK (85 aa). A helical membrane pass occupies residues 2398 to 2421; the sequence is KVVKYGMGGMIIVLLICIVWFPLL. Residues 2422–2669 are Extracellular-facing; sequence FMSLIKSVAG…PSLGFLAGYG (248 aa). A helical membrane pass occupies residues 2670–2690; the sequence is IMGLYASVVLVIGKFVREFFS. Residues 2691-2752 are Cytoplasmic-facing; the sequence is GISHSIMFEE…MIKWTREKTN (62 aa).

This sequence belongs to the PIEZO (TC 1.A.75) family. In terms of assembly, homotrimer; the homotrimer forms a propeller-shaped Piezo channel with a cation-ion conducting pore. Heterotrimeric interaction may occur between PIEZO1 and PIEZO2. Interacts with STOML3. Interacts with TMC7; the interaction inhibits PIEZO2-conducted mechanically activated currents. Interacts with TMC1; the interaction may be part of the MET complex. Interacts with MDFIC (via C-terminus); the interaction prolongs Piezo channel inactivation. Interacts with MDFI (via C-terminus); the interaction prolongs Piezo channel inactivation.

Its subcellular location is the cell membrane. It catalyses the reaction Ca(2+)(in) = Ca(2+)(out). Its activity is regulated as follows. Regulated by auxillary subunits MDFIC and MDFI. Channel activity is inhibited by TMEM120A. Phosphatidic acid and lysophosphatidic acid inhibit PIEZO2 channel activity. Functionally, pore-forming subunit of the mechanosensitive non-specific cation Piezo channel required for rapidly adapting mechanically activated (MA) currents and has a key role in sensing touch and tactile pain. Piezo channels are homotrimeric three-blade propeller-shaped structures that utilize a cap-motion and plug-and-latch mechanism to gate their ion-conducting pathways. Expressed in sensory neurons, is essential for diverse physiological processes, including respiratory control, systemic metabolism, urinary function, and proprioception. Mediates airway stretch sensing, enabling efficient respiration at birth and maintaining normal breathing in adults. It regulates brown and beige adipose tissue morphology and function, preventing systemic hypermetabolism. In the lower urinary tract, acts as a sensor in both the bladder urothelium and innervating sensory neurons being required for bladder-stretch sensing and urethral micturition reflexes, ensuring proper urinary function. Additionally, PIEZO2 serves as the principal mechanotransducer in proprioceptors, facilitating proprioception and coordinated body movements. In inner ear hair cells, PIEZO1/2 subunits may constitute part of the mechanotransducer (MET) non-selective cation channel complex where they may act as pore-forming ion-conducting component in the complex. Required for Merkel-cell mechanotransduction. Plays a major role in light-touch mechanosensation. This chain is Piezo-type mechanosensitive ion channel component 2, found in Homo sapiens (Human).